We begin with the raw amino-acid sequence, 165 residues long: Small ribosomal subunit protein uS5 (165 aa).

Residues 13 to 76 form the S5 DRBM domain; the sequence is LEEKVLVVNR…EAARKNLITI (64 aa).

Belongs to the universal ribosomal protein uS5 family. Part of the 30S ribosomal subunit. Contacts proteins S4 and S8.

In terms of biological role, with S4 and S12 plays an important role in translational accuracy. Its function is as follows. Located at the back of the 30S subunit body where it stabilizes the conformation of the head with respect to the body. The sequence is that of Small ribosomal subunit protein uS5 from Chlamydia abortus (strain DSM 27085 / S26/3) (Chlamydophila abortus).